Here is a 68-residue protein sequence, read N- to C-terminus: Large ribosomal subunit protein bL35 (68 aa).

The tract at residues glycine 29–valine 68 is disordered. Over residues asparagine 35–arginine 47 the composition is skewed to basic residues.

The protein belongs to the bacterial ribosomal protein bL35 family.

This is Large ribosomal subunit protein bL35 from Sulfurihydrogenibium sp. (strain YO3AOP1).